Reading from the N-terminus, the 270-residue chain is MSMQTAKTKKITLNHLQAKKNHEKIIAITAYDALFAQMFDPIVDVILVGDSLNMSFFNQNDTLSASLEMMLYHTKAVCMGAKTPFIITDMPFGSYKDEKTALKNAIKVYKETQASAIKLEGGKEKAKLVKTLTNEGVIVVGHIGLMPQFVRLDGGYKIKGKNEEQQKKLLEDALSLEEAGVGLLVLEGITTPIAQVITQKIKIPTIGIGSGKDCDGQILVWSDMLGFFDSFKPKFVREYLKGKELVQKAIEQYADDVKKGFFPNELESYH.

D50 and D89 together coordinate Mg(2+). 3-methyl-2-oxobutanoate is bound by residues 50–51 (DS), D89, and K118. Mg(2+) is bound at residue E120. E187 (proton acceptor) is an active-site residue.

The protein belongs to the PanB family. As to quaternary structure, homodecamer; pentamer of dimers. Mg(2+) is required as a cofactor.

It localises to the cytoplasm. The catalysed reaction is 3-methyl-2-oxobutanoate + (6R)-5,10-methylene-5,6,7,8-tetrahydrofolate + H2O = 2-dehydropantoate + (6S)-5,6,7,8-tetrahydrofolate. Its pathway is cofactor biosynthesis; (R)-pantothenate biosynthesis; (R)-pantoate from 3-methyl-2-oxobutanoate: step 1/2. Its function is as follows. Catalyzes the reversible reaction in which hydroxymethyl group from 5,10-methylenetetrahydrofolate is transferred onto alpha-ketoisovalerate to form ketopantoate. The sequence is that of 3-methyl-2-oxobutanoate hydroxymethyltransferase from Helicobacter acinonychis (strain Sheeba).